Consider the following 74-residue polypeptide: Mucroporin (74 aa).

The signal sequence occupies residues Met1–Ala22. Lysine amide is present on Lys39. Residues Gln45–Tyr74 constitute a propeptide that is removed on maturation.

Belongs to the non-disulfide-bridged peptide (NDBP) superfamily. Short antimicrobial peptide (group 4) family. As to expression, expressed by the venom gland.

The protein resides in the secreted. It is found in the target cell membrane. In terms of biological role, mucroporin: cationic host defense peptide that have antibacterial activity by breaking membranes. Is more effective on Gram-positive than on Gram-negative bacteria. Minimum inhibitory concentrations (MIC) are the following: MIC=&gt;100 ug/ml against E.coli AB94012, MIC=&gt;100 ug/ml against P.aeruginosa AB93066, MIC=25 ug/ml against B.thuringiensis AB92037, MIC=50 ug/ml against B.subtilis AB91021, MIC=25 ug/ml against S.aureus AB94004, and MIC=25 ug/ml against the methicillin-resistant coagulase-negative Staphylococcus. Its synthetic analog mucroporin-M1 is more effective. Does not show antiviral activity against any of measles, SARS-CoV, influenza H5N1, hepatitis B and HIV-1 viruses. Mutant mucroporin-M1: can inhibit Gram-positive bacteria at low concentrations and antibiotic-resistant pathogens. Minimum inhibitory concentrations (MIC) are the following: MIC=12.5 ug/ml against E.coli AB94012, MIC=100 ug/ml against P.aeruginosa AB93066, MIC=25 ug/ml against B.thuringiensis AB92037, MIC=25 ug/ml against B.subtilis AB91021, MIC=5 ug/ml against S.aureus AB94004, and MIC=5 ug/ml against the methicillin-resistant coagulase-negative Staphylococcus. Also shows antiviral activities against measles (EC(50) of 7.15 ug/ml), SARS-CoV (EC(50) of 14.46 ug/ml), influenza H5N1 viruses (EC(50) of 2.10 mug/ml), HIV-1, and hepatitis B virus. This chain is Mucroporin, found in Lychas mucronatus (Chinese swimming scorpion).